The following is a 418-amino-acid chain: Acyl-coenzyme A amino acid N-acyltransferase 2 (418 aa).

Catalysis depends on charge relay system residues S234, D327, and H361. The short motif at 416–418 (GKL) is the Microbody targeting signal element.

Belongs to the C/M/P thioester hydrolase family.

The protein localises to the peroxisome. Its function is as follows. Acyltransferase which efficiently conjugates very long-chain and long-chain fatty acids to taurine. Shows no conjugation activity in the presence of glycine. The chain is Acyl-coenzyme A amino acid N-acyltransferase 2 from Rattus norvegicus (Rat).